The sequence spans 190 residues: Adenylate kinase (190 aa).

Residue 11-16 (GAGKGT) participates in ATP binding. The segment at 31–60 (STGDIFRFNLKNDTELGKQARVFMDNGELV) is NMP. AMP contacts are provided by residues Thr32, Arg37, 58 to 60 (ELV), 86 to 89 (GYPR), and Gln93. The tract at residues 127-137 (ERGKTSGRADD) is LID. Arg128 lines the ATP pocket. AMP is bound by residues Arg134 and Arg146. Gly174 contacts ATP.

This sequence belongs to the adenylate kinase family. Monomer.

Its subcellular location is the cytoplasm. It catalyses the reaction AMP + ATP = 2 ADP. It participates in purine metabolism; AMP biosynthesis via salvage pathway; AMP from ADP: step 1/1. Catalyzes the reversible transfer of the terminal phosphate group between ATP and AMP. Plays an important role in cellular energy homeostasis and in adenine nucleotide metabolism. The polypeptide is Adenylate kinase (Flavobacterium johnsoniae (strain ATCC 17061 / DSM 2064 / JCM 8514 / BCRC 14874 / CCUG 350202 / NBRC 14942 / NCIMB 11054 / UW101) (Cytophaga johnsonae)).